A 466-amino-acid polypeptide reads, in one-letter code: Probable Xaa-Pro aminopeptidase pepP (466 aa).

D264, D275, E398, and E438 together coordinate Mn(2+).

It belongs to the peptidase M24B family. Requires Mn(2+) as cofactor.

It carries out the reaction Release of any N-terminal amino acid, including proline, that is linked to proline, even from a dipeptide or tripeptide.. Its function is as follows. Catalyzes the removal of a penultimate prolyl residue from the N-termini of peptides. The polypeptide is Probable Xaa-Pro aminopeptidase pepP (pepP) (Aspergillus terreus (strain NIH 2624 / FGSC A1156)).